Reading from the N-terminus, the 155-residue chain is Lipoprotein signal peptidase (155 aa).

The next 4 membrane-spanning stretches (helical) occupy residues 7–27, 39–59, 63–83, and 96–116; these read WFWIVAVIGLILDQVTKYITV, IIPGVFHFTYVINTGAAFSAF, VGWLKWLSLLVSLGLMAFAYF, and GFILAGAFGNGIDRFLFGYVV. Catalysis depends on residues Asp117 and Asp133. The helical transmembrane segment at 126 to 146 threads the bilayer; sequence FPVFNLADVFINIGIICLLIS.

This sequence belongs to the peptidase A8 family.

Its subcellular location is the cell inner membrane. The enzyme catalyses Release of signal peptides from bacterial membrane prolipoproteins. Hydrolyzes -Xaa-Yaa-Zaa-|-(S,diacylglyceryl)Cys-, in which Xaa is hydrophobic (preferably Leu), and Yaa (Ala or Ser) and Zaa (Gly or Ala) have small, neutral side chains.. It functions in the pathway protein modification; lipoprotein biosynthesis (signal peptide cleavage). This protein specifically catalyzes the removal of signal peptides from prolipoproteins. This is Lipoprotein signal peptidase from Microcystis aeruginosa (strain NIES-843 / IAM M-2473).